Here is a 453-residue protein sequence, read N- to C-terminus: Elongation factor 1-alpha (453 aa).

The 226-residue stretch at 5-230 (KTHINIVVIG…DAIVEPKRPH (226 aa)) folds into the tr-type G domain. The G1 stretch occupies residues 14-21 (GHVDAGKS). 14-21 (GHVDAGKS) lines the GTP pocket. The interval 70-74 (GITID) is G2. The tract at residues 91-94 (DAPG) is G3. GTP is bound by residues 91–95 (DAPGH) and 153–156 (NKMD). A G4 region spans residues 153-156 (NKMD). The G5 stretch occupies residues 194 to 196 (SGW).

This sequence belongs to the TRAFAC class translation factor GTPase superfamily. Classic translation factor GTPase family. EF-Tu/EF-1A subfamily. Binds to actin.

It localises to the cytoplasm. This protein promotes the GTP-dependent binding of aminoacyl-tRNA to the A-site of ribosomes during protein biosynthesis. It is also an abundant actin filament bundling protein. The sequence is that of Elongation factor 1-alpha (eef1a2) from Dictyostelium discoideum (Social amoeba).